Here is a 290-residue protein sequence, read N- to C-terminus: MSKKHPIISVTGSSGAGTSTVKHTFDQIFRREGVKAVSIEGDAFHRFNRADMKAELDRRYAAGDATFSHFSYEANELKELERVFREYGETGQGRTRTYVHDDAEAARTGVAPGNFTDWRDFDSDSHLLFYEGLHGAVVNSEVNIAGLADLKIGVVPVINLEWIQKIHRDRATRGYTTEAVTDVILRRMHAYVHCIVPQFSQTDINFQRVPVVDTSNPFIARWIPTADESVVVIRFRNPRGIDFPYLTSMIHGSWMSRANSIVVPGNKLDLAMQLILTPLIDRVVRESKVA.

12 to 20 (GSSGAGTST) contacts ATP.

This sequence belongs to the phosphoribulokinase family. As to quaternary structure, homooctamer.

It carries out the reaction D-ribulose 5-phosphate + ATP = D-ribulose 1,5-bisphosphate + ADP + H(+). The protein operates within carbohydrate biosynthesis; Calvin cycle. With respect to regulation, activated by NADH and inhibited by phosphoenolpyruvate. The polypeptide is Phosphoribulokinase 1 (prkA) (Cereibacter sphaeroides (Rhodobacter sphaeroides)).